A 334-amino-acid chain; its full sequence is Protein-methionine-sulfoxide reductase catalytic subunit MsrP (334 aa).

The tat-type signal signal peptide spans 1–44; that stretch reads MKKNQFLKESDITAESVFFMKRRQVLKALGISAAALSLPHAAHA. Mo-molybdopterin-binding positions include Asn88, 91–92, Cys146, Thr181, Asn233, Arg238, and 249–251; these read YE and GIK.

The protein belongs to the MsrP family. Heterodimer of a catalytic subunit (MsrP) and a heme-binding subunit (MsrQ). The cofactor is Mo-molybdopterin. Post-translationally, predicted to be exported by the Tat system. The position of the signal peptide cleavage has not been experimentally proven.

The protein localises to the periplasm. The catalysed reaction is L-methionyl-[protein] + a quinone + H2O = L-methionyl-(S)-S-oxide-[protein] + a quinol. The enzyme catalyses L-methionyl-[protein] + a quinone + H2O = L-methionyl-(R)-S-oxide-[protein] + a quinol. In terms of biological role, part of the MsrPQ system that repairs oxidized periplasmic proteins containing methionine sulfoxide residues (Met-O), using respiratory chain electrons. Thus protects these proteins from oxidative-stress damage caused by reactive species of oxygen and chlorine generated by the host defense mechanisms. MsrPQ is essential for the maintenance of envelope integrity under bleach stress, rescuing a wide series of structurally unrelated periplasmic proteins from methionine oxidation, including the primary periplasmic chaperone SurA and the lipoprotein Pal. The catalytic subunit MsrP is non-stereospecific, being able to reduce both (R-) and (S-) diastereoisomers of methionine sulfoxide. The sequence is that of Protein-methionine-sulfoxide reductase catalytic subunit MsrP from Shigella dysenteriae serotype 1 (strain Sd197).